The following is a 179-amino-acid chain: Natural killer cells antigen CD94 (179 aa).

At 1-10 (MAVSRITRWR) the chain is on the cytoplasmic side. Residues 11–31 (LMSVIFGIKCLFLMVTLGVLL) traverse the membrane as a helical; Signal-anchor for type II membrane protein segment. At 32-179 (INSFTIQNIQ…NRYICKKLPI (148 aa)) the chain is on the extracellular side. Cystine bridges form between C58–C70, C61–C72, C89–C174, and C152–C166. Residues 68 to 175 (HQCNCYFISK…CENKNRYICK (108 aa)) form the C-type lectin domain. N93 and N109 each carry an N-linked (GlcNAc...) asparagine glycan.

As to quaternary structure, can form disulfide-bonded heterodimer with NKG2 family members KLRC1 and KLRC2. KLRD1-KLRC1 heterodimer interacts with peptide-bound MHC-E-B2M heterotrimeric complex. KLRD1 plays a prominent role in directly interacting with MHC-E. KLRD1-KLRC1 interacts with much higher affinity with peptide-bound MHC-E-B2M than KLRD1-KLRC2. Interacts with the adapter protein TYROBP/DAP12; this interaction is required for cell surface expression and cell activation.

It is found in the cell membrane. Its function is as follows. Immune receptor involved in self-nonself discrimination. In complex with KLRC1 or KLRC2 on cytotoxic and regulatory lymphocyte subsets, recognizes non-classical major histocompatibility (MHC) class Ib molecule MHC-E loaded with self-peptides derived from the signal sequence of classical MHC class Ia and non-classical MHC class Ib molecules. Enables cytotoxic cells to monitor the expression of MHC class I molecules in healthy cells and to tolerate self. Primarily functions as a ligand binding subunit as it lacks the capacity to signal. In terms of biological role, KLRD1-KLRC1 acts as an immune inhibitory receptor. Key inhibitory receptor on natural killer (NK) cells that regulates their activation and effector functions. Dominantly counteracts T cell receptor signaling on a subset of memory/effector CD8-positive T cells as part of an antigen-driven response to avoid autoimmunity. On intraepithelial CD8-positive gamma-delta regulatory T cells triggers TGFB1 secretion, which in turn limits the cytotoxic programming of intraepithelial CD8-positive alpha-beta T cells, distinguishing harmless from pathogenic antigens. In MHC-E-rich tumor microenvironment, acts as an immune inhibitory checkpoint and may contribute to progressive loss of effector functions of NK cells and tumor-specific T cells, a state known as cell exhaustion. Upon MHC-E-peptide binding, transmits intracellular signals through KLRC1 immunoreceptor tyrosine-based inhibition motifs (ITIMs) by recruiting INPP5D/SHIP-1 and INPPL1/SHIP-2 tyrosine phosphatases to ITIMs, and ultimately opposing signals transmitted by activating receptors through dephosphorylation of proximal signaling molecules. KLRD1-KLRC2 acts as an immune activating receptor. On cytotoxic lymphocyte subsets recognizes MHC-E loaded with signal sequence-derived peptides from non-classical MHC class Ib MHC-G molecules, likely playing a role in the generation and effector functions of adaptive NK cells and in maternal-fetal tolerance during pregnancy. Regulates the effector functions of terminally differentiated cytotoxic lymphocyte subsets, and in particular may play a role in adaptive NK cell response to viral infection. Upon MHC-E-peptide binding, transmits intracellular signals via the adapter protein TYROBP/DAP12, triggering the phosphorylation of proximal signaling molecules and cell activation. The chain is Natural killer cells antigen CD94 (Klrd1) from Mus musculus (Mouse).